Here is a 54-residue protein sequence, read N- to C-terminus: MLYYAAVFFVIALIAAVLGFGGIAAGAAGIAKILFFVFLVLALLSVLSGALRKK.

Transmembrane regions (helical) follow at residues 5–25 and 27–47; these read AAVFFVIALIAAVLGFGGIAA and AAGIAKILFFVFLVLALLSVL.

Belongs to the UPF0391 family.

The protein resides in the cell membrane. The polypeptide is UPF0391 membrane protein BAV1230 (Bordetella avium (strain 197N)).